The following is a 669-amino-acid chain: Threonine--tRNA ligase (669 aa).

One can recognise a TGS domain in the interval 3-60 (DAQQITLIVDGEETKVTEGTTGAELFFERRDVVVARVNGVLKDLDQVLTEGADVEGVT). The interval 260 to 566 (DHRKLGVELD…LTEHYAGAFP (307 aa)) is catalytic. Residues Cys365, His416, and His543 each coordinate Zn(2+).

This sequence belongs to the class-II aminoacyl-tRNA synthetase family. Homodimer. Zn(2+) is required as a cofactor.

The protein localises to the cytoplasm. The catalysed reaction is tRNA(Thr) + L-threonine + ATP = L-threonyl-tRNA(Thr) + AMP + diphosphate + H(+). Functionally, catalyzes the attachment of threonine to tRNA(Thr) in a two-step reaction: L-threonine is first activated by ATP to form Thr-AMP and then transferred to the acceptor end of tRNA(Thr). Also edits incorrectly charged L-seryl-tRNA(Thr). The chain is Threonine--tRNA ligase from Paenarthrobacter aurescens (strain TC1).